A 409-amino-acid chain; its full sequence is Salivary endonuclease (409 aa).

Residues M1–G20 form the signal peptide. N37 and N102 each carry an N-linked (GlcNAc...) asparagine glycan. The active-site Proton acceptor is H216. N246 provides a ligand contact to Mg(2+). 2 N-linked (GlcNAc...) asparagine glycosylation sites follow: N351 and N381.

The protein belongs to the DNA/RNA non-specific endonuclease family. Mg(2+) is required as a cofactor. In terms of tissue distribution, salivary gland.

The protein resides in the secreted. Functionally, hydrolyzes single-stranded and double-stranded DNA with little sequence specificity. Inhibits contact pathway of blood coagulation in the host by preventing activation of coagulation factor XII (F12) triggered by soluble DNA. Modestly up-regulates expression of CSF2, CXCL1 and CXCL8 in cultured human dermal microvascular endothelial cells. At higher doses promotes host neutrophil recruitment at the injection site in mouse model. In terms of biological role, (Microbial infection) Increases Leishmania major survival in the host by disrupting parasite-induced neutrophil extracellular traps. Exacerbates L.major parasite infectivity and increases cutaneous lesions in mouse model. This Lutzomyia longipalpis (Sand fly) protein is Salivary endonuclease.